Reading from the N-terminus, the 98-residue chain is uncharacterized protein (98 aa).

Transmembrane regions (helical) follow at residues phenylalanine 14–alanine 34 and methionine 41–isoleucine 61.

The protein localises to the cell membrane. This is an uncharacterized protein from Haemophilus influenzae (strain ATCC 51907 / DSM 11121 / KW20 / Rd).